The chain runs to 89 residues: MKFPAVKVLIISLLITSSLFILSTADSSPCGGKCNVRCSKAGRQDRCLKYCNICCEKCNYCVPSGTYGNKDECPCYRDMKNSKGTSKCP.

The N-terminal stretch at 1–25 (MKFPAVKVLIISLLITSSLFILSTA) is a signal peptide.

The protein belongs to the GASA family. Post-translationally, six disulfide bonds may be present. Expressed in vasculature of rosette leaves and roots, cotyledon and root tips and developing seeds.

Its subcellular location is the secreted. Its function is as follows. Gibberellin-regulated protein that may function in hormonal controlled steps of development such as seed germination, flowering and seed maturation. The chain is Gibberellin-regulated protein 10 (GASA10) from Arabidopsis thaliana (Mouse-ear cress).